Reading from the N-terminus, the 298-residue chain is Serine/threonine-protein kinase 1 (298 aa).

Positions 38–276 (FIATRPMFEG…FKSLVSHPWF (239 aa)) constitute a Protein kinase domain. Residues 45–53 (FEGGRNNVF) and Lys65 each bind ATP. The active-site Proton acceptor is Asp152.

The protein belongs to the protein kinase superfamily. Ser/Thr protein kinase family.

The protein localises to the virion. The protein resides in the host cytoplasm. It carries out the reaction L-seryl-[protein] + ATP = O-phospho-L-seryl-[protein] + ADP + H(+). It catalyses the reaction L-threonyl-[protein] + ATP = O-phospho-L-threonyl-[protein] + ADP + H(+). Its function is as follows. Essential for viral replication. It may mediate the virus progression through DNA replication. The chain is Serine/threonine-protein kinase 1 from African swine fever virus (strain Badajoz 1971 Vero-adapted) (Ba71V).